The sequence spans 100 residues: Small ribosomal subunit protein uS14c (100 aa).

It belongs to the universal ribosomal protein uS14 family. As to quaternary structure, part of the 30S ribosomal subunit.

Its subcellular location is the plastid. The protein localises to the chloroplast. In terms of biological role, binds 16S rRNA, required for the assembly of 30S particles. In Bigelowiella natans (Pedinomonas minutissima), this protein is Small ribosomal subunit protein uS14c.